Consider the following 413-residue polypeptide: MDLETIRKVDPEAAKAIEQELDRQQFTLELIASENIASPAVMAAQGSVMTNKYAEGYPGHRYYGGCEFVDVAENLARDRAKELFQADYANVQPHSGSQANMGVYFALLEPGDTVLGMDLSHGGHLTHGSPVSFSGRIFNFIHYGVKEKTGTIDYDQLRSLAKEHKPKLIVAGASAYPRIIDFPELEKIARETGAYLMVDMAHIAGLVAAGEHPSPLPYADVVTTTTHKTLRGPRGGMILSNKGFGKKLSSQIFPGIQGGPLMHVIAAKAVAFKEALTPEFKAYQQQVVKNAACLAKRLMDNGVDLVSGGTDNHMMLLNLSNLDITGKEAEGLVEQAGITVNKNTIPFDKNGPAVTSGIRVGTPTITSRGMKEPEMELIADCLANVLKNPQDQALIESTRAKVKDLCQSFPIYA.

(6S)-5,6,7,8-tetrahydrofolate-binding positions include Leu119 and 123 to 125 (GHL). The residue at position 228 (Lys228) is an N6-(pyridoxal phosphate)lysine.

Belongs to the SHMT family. In terms of assembly, homodimer. Pyridoxal 5'-phosphate is required as a cofactor.

It localises to the cytoplasm. The catalysed reaction is (6R)-5,10-methylene-5,6,7,8-tetrahydrofolate + glycine + H2O = (6S)-5,6,7,8-tetrahydrofolate + L-serine. It functions in the pathway one-carbon metabolism; tetrahydrofolate interconversion. The protein operates within amino-acid biosynthesis; glycine biosynthesis; glycine from L-serine: step 1/1. In terms of biological role, catalyzes the reversible interconversion of serine and glycine with tetrahydrofolate (THF) serving as the one-carbon carrier. This reaction serves as the major source of one-carbon groups required for the biosynthesis of purines, thymidylate, methionine, and other important biomolecules. Also exhibits THF-independent aldolase activity toward beta-hydroxyamino acids, producing glycine and aldehydes, via a retro-aldol mechanism. This is Serine hydroxymethyltransferase from Desulfatibacillum aliphaticivorans.